The primary structure comprises 156 residues: Small ribosomal subunit protein uS7 (156 aa).

It belongs to the universal ribosomal protein uS7 family. As to quaternary structure, part of the 30S ribosomal subunit. Contacts proteins S9 and S11.

In terms of biological role, one of the primary rRNA binding proteins, it binds directly to 16S rRNA where it nucleates assembly of the head domain of the 30S subunit. Is located at the subunit interface close to the decoding center, probably blocks exit of the E-site tRNA. This Ruminiclostridium cellulolyticum (strain ATCC 35319 / DSM 5812 / JCM 6584 / H10) (Clostridium cellulolyticum) protein is Small ribosomal subunit protein uS7.